The sequence spans 323 residues: tRNA uridine(34) hydroxylase (323 aa).

A Rhodanese domain is found at 127–221; sequence QDENTVVLDA…YGQDPEVQGD (95 aa). The Cysteine persulfide intermediate role is filled by cysteine 181.

Belongs to the TrhO family.

It catalyses the reaction uridine(34) in tRNA + AH2 + O2 = 5-hydroxyuridine(34) in tRNA + A + H2O. Catalyzes oxygen-dependent 5-hydroxyuridine (ho5U) modification at position 34 in tRNAs. The sequence is that of tRNA uridine(34) hydroxylase from Oceanobacillus iheyensis (strain DSM 14371 / CIP 107618 / JCM 11309 / KCTC 3954 / HTE831).